The following is a 100-amino-acid chain: Large ribosomal subunit protein uL23 (100 aa).

Belongs to the universal ribosomal protein uL23 family. In terms of assembly, part of the 50S ribosomal subunit. Contacts protein L29, and trigger factor when it is bound to the ribosome.

One of the early assembly proteins it binds 23S rRNA. One of the proteins that surrounds the polypeptide exit tunnel on the outside of the ribosome. Forms the main docking site for trigger factor binding to the ribosome. The protein is Large ribosomal subunit protein uL23 of Prochlorococcus marinus (strain MIT 9301).